A 180-amino-acid chain; its full sequence is Colicin-E5 (180 aa).

Disordered regions lie at residues 24-143 (AQTD…GSPG) and 155-180 (VTQI…KNDQ). The segment covering 54–76 (ESRKKKEDNKRDAEGKLNDELAK) has biased composition (basic and acidic residues). The interval 74 to 180 (LAKNKGKIPG…RIQWGNKNDQ (107 aa)) is nuclease. Polar residues predominate over residues 106-116 (NTVSNGATGTS). The span at 160-171 (DKTDPGWVDDSR) shows a compositional bias: basic and acidic residues.

Belongs to the colicin/pyosin nuclease family.

Functionally, colicins are polypeptide toxins produced by and active against E.coli and closely related bacteria. This colicin is an endonuclease. The polypeptide is Colicin-E5 (col) (Escherichia coli).